Here is a 147-residue protein sequence, read N- to C-terminus: NADH-quinone oxidoreductase subunit A (147 aa).

3 helical membrane passes run 16–36 (FAIFLIIAIGLCCLMLVGGWF), 68–88 (FYLVAMFFVIFDVEALYLFAW), and 98–118 (VGFVEAAIFIFVLLAGLVYLV).

The protein belongs to the complex I subunit 3 family. NDH-1 is composed of 13 different subunits. Subunits NuoA, H, J, K, L, M, N constitute the membrane sector of the complex.

It localises to the cell inner membrane. It catalyses the reaction a quinone + NADH + 5 H(+)(in) = a quinol + NAD(+) + 4 H(+)(out). Functionally, NDH-1 shuttles electrons from NADH, via FMN and iron-sulfur (Fe-S) centers, to quinones in the respiratory chain. The immediate electron acceptor for the enzyme in this species is believed to be ubiquinone. Couples the redox reaction to proton translocation (for every two electrons transferred, four hydrogen ions are translocated across the cytoplasmic membrane), and thus conserves the redox energy in a proton gradient. This is NADH-quinone oxidoreductase subunit A from Citrobacter koseri (strain ATCC BAA-895 / CDC 4225-83 / SGSC4696).